We begin with the raw amino-acid sequence, 377 residues long: Virion membrane protein A16 (377 aa).

The N-myristoyl glycine; by host moiety is linked to residue G2. The Virion surface segment spans residues 2 to 341 (GAAVTLNRIK…VVKDKIKLPT (340 aa)). Residues 342 to 362 (WLGAAITLVVISVIFYFISIY) form a helical; Signal-anchor for type II membrane protein membrane-spanning segment. Residues 363–377 (SRTKIKTNDINVRRR) lie on the Intravirion side of the membrane.

Belongs to the poxviridae A16/G9/J5 family. In terms of assembly, part of a stable entry-fusion complex (EFC) which is at least composed of proteins A16, A21, A28, G3, G9, H2, J5, and L5. Formation of the viral membrane is necessary for the assembly of the complex. Interacts with G9. In terms of processing, most cysteines are linked by disulfide bonds. They are created by the viral disulfide bond formation pathway, a poxvirus-specific redox pathway that operates on the cytoplasmic side of the MV membranes.

It is found in the virion membrane. In terms of biological role, envelope protein part of the entry-fusion complex responsible for the virus membrane fusion with host cell membrane during virus entry. Also plays a role in cell-cell fusion (syncytium formation). In Homo sapiens (Human), this protein is Virion membrane protein A16.